A 137-amino-acid polypeptide reads, in one-letter code: Large ribosomal subunit protein uL16c (137 aa).

This sequence belongs to the universal ribosomal protein uL16 family. Part of the 50S ribosomal subunit.

It is found in the plastid. It localises to the chloroplast. The polypeptide is Large ribosomal subunit protein uL16c (Rhodomonas salina (Cryptomonas salina)).